Consider the following 125-residue polypeptide: uncharacterized protein (125 aa).

The protein belongs to the asfivirus B125R family.

This is an uncharacterized protein from Ornithodoros (relapsing fever ticks).